A 274-amino-acid chain; its full sequence is Copper chaperone for superoxide dismutase (274 aa).

The HMA domain occupies 11-74 (ACMLEFAVQM…LLEDTGRQAV (64 aa)). Residues Cys22 and Cys25 each coordinate Cu cation. Lys76 participates in a covalent cross-link: Glycyl lysine isopeptide (Lys-Gly) (interchain with G-Cter in ubiquitin). The tract at residues 88–234 (AAVAILGGSG…LACGIIARSA (147 aa)) is superoxide dismutase-like. Cys141 and Cys227 form a disulfide bridge. Residues His147, His155, His164, and Asp167 each contribute to the Zn(2+) site. Glycyl lysine isopeptide (Lys-Gly) (interchain with G-Cter in ubiquitin) cross-links involve residues Lys189, Lys216, and Lys241. Cu cation-binding residues include Cys244 and Cys246.

It in the C-terminal section; belongs to the Cu-Zn superoxide dismutase family. Homodimer, and heterodimer with SOD1. Interacts with COMMD1. Interacts with XIAP/BIRC4. Interacts with SLC31A1(via C-terminal domain); this interaction is Cu(1+)-mediated. The heterodimer CCS:SOD1 interacts with SLC31A1; this heterotrimer is Cu(1+)-mediated and its maintenance is regulated through SOD1 activation. Cu(2+) serves as cofactor. It depends on Zn(2+) as a cofactor. In terms of processing, ubiquitinion by XIAP/BIRC4 leads to enhancement of its chaperone activity toward its physiologic target, SOD1, rather than proteasomal degradation. XIAP/BIRC4 preferentially ubiquitinates at Lys-241.

Its subcellular location is the cytoplasm. Functionally, delivers copper to copper zinc superoxide dismutase (SOD1). This chain is Copper chaperone for superoxide dismutase, found in Sus scrofa (Pig).